The chain runs to 426 residues: MALIDAIHAREILDSRGNPTVEVEVLLSDGQIGRAAVPSGASTGEHEAVELRDGDKGRYLGKGVQKAVDAVIDQIAPALTGFDATDQRSIDQAMIDLDGTPNKSKLGANAILGVSLAVANAAAASADLPLYKYLGGPNAHVLPVPLMNILNGGSHADSDVDIQEFMIAPIGAETFSEGLRWGVEVYHNLKSVLQAKGLSTGLGDEGGFAPNLPSNRAALDLIQEAIKNAGYIPGKDIALALDVASSEFFKDGAYQFEGKALSATEMSAYYAELVADYPLVSIEDPLDENDWEGWKTLTDAIGDKVQLVGDDLFVTNPSILQRGIDTATANSLLVKVNQIGSLTETLDAVSLAQRAGYTTITSHRSGETEDTTIADIAVATNAGQIKTGAPARSERVAKYNQLLRIEEELDDAARYAGRSAFPRFKG.

Glutamine 163 serves as a coordination point for (2R)-2-phosphoglycerate. Glutamate 205 (proton donor) is an active-site residue. Aspartate 242, glutamate 283, and aspartate 310 together coordinate Mg(2+). (2R)-2-phosphoglycerate is bound by residues lysine 335, arginine 364, serine 365, and lysine 386. The active-site Proton acceptor is lysine 335.

Belongs to the enolase family. The cofactor is Mg(2+).

It is found in the cytoplasm. Its subcellular location is the secreted. The protein localises to the cell surface. It carries out the reaction (2R)-2-phosphoglycerate = phosphoenolpyruvate + H2O. Its pathway is carbohydrate degradation; glycolysis; pyruvate from D-glyceraldehyde 3-phosphate: step 4/5. Catalyzes the reversible conversion of 2-phosphoglycerate (2-PG) into phosphoenolpyruvate (PEP). It is essential for the degradation of carbohydrates via glycolysis. The polypeptide is Enolase (Arthrobacter sp. (strain FB24)).